A 201-amino-acid polypeptide reads, in one-letter code: Small ribosomal subunit protein uS4c (201 aa).

Residues 20 to 44 form a disordered region; sequence GLTSKRPRAGSDLRNQSRSGKKSQY. Positions 89 to 152 constitute an S4 RNA-binding domain; that stretch reads MRLDNTLFRL…NSRTLVQNLL (64 aa).

Belongs to the universal ribosomal protein uS4 family. As to quaternary structure, part of the 30S ribosomal subunit. Contacts protein S5. The interaction surface between S4 and S5 is involved in control of translational fidelity.

It is found in the plastid. It localises to the chloroplast. In terms of biological role, one of the primary rRNA binding proteins, it binds directly to 16S rRNA where it nucleates assembly of the body of the 30S subunit. With S5 and S12 plays an important role in translational accuracy. This Aethionema grandiflorum (Persian stone-cress) protein is Small ribosomal subunit protein uS4c (rps4).